Reading from the N-terminus, the 243-residue chain is Adenosylcobinamide-GDP ribazoletransferase (243 aa).

The next 5 helical transmembrane spans lie at 31-51, 57-77, 109-129, 135-155, and 188-208; these read LLFYPLVGLLFGVILWALNIA, LLLHAALLLAVWVLLSGALHL, IAVVTLVLVLLLKFAALLALI, MALIIVPLIGRAALLGLFLTT, and LVIAGFNAVVALLLAVIVFIW.

It belongs to the CobS family. The cofactor is Mg(2+).

The protein resides in the cell inner membrane. The catalysed reaction is alpha-ribazole + adenosylcob(III)inamide-GDP = adenosylcob(III)alamin + GMP + H(+). It carries out the reaction alpha-ribazole 5'-phosphate + adenosylcob(III)inamide-GDP = adenosylcob(III)alamin 5'-phosphate + GMP + H(+). Its pathway is cofactor biosynthesis; adenosylcobalamin biosynthesis; adenosylcobalamin from cob(II)yrinate a,c-diamide: step 7/7. Joins adenosylcobinamide-GDP and alpha-ribazole to generate adenosylcobalamin (Ado-cobalamin). Also synthesizes adenosylcobalamin 5'-phosphate from adenosylcobinamide-GDP and alpha-ribazole 5'-phosphate. In Pseudomonas fluorescens (strain Pf0-1), this protein is Adenosylcobinamide-GDP ribazoletransferase.